The primary structure comprises 141 residues: Lutropin subunit beta (141 aa).

The first 20 residues, 1 to 20 (MEMLQGLLLWLLLSVGGVWA), serve as a signal peptide directing secretion. Cystine bridges form between cysteine 29–cysteine 77, cysteine 43–cysteine 92, cysteine 46–cysteine 130, cysteine 54–cysteine 108, cysteine 58–cysteine 110, and cysteine 113–cysteine 120. Asparagine 33 is a glycosylation site (N-linked (GlcNAc...) asparagine).

The protein belongs to the glycoprotein hormones subunit beta family. Heterodimer of a common alpha chain and a unique beta chain which confers biological specificity to thyrotropin, lutropin, follitropin and gonadotropin.

The protein localises to the secreted. In terms of biological role, promotes spermatogenesis and ovulation by stimulating the testes and ovaries to synthesize steroids. This is Lutropin subunit beta (LHB1) from Ceratotherium simum (White rhinoceros).